The sequence spans 249 residues: 2,3-bisphosphoglycerate-dependent phosphoglycerate mutase (249 aa).

Residues 11–18 (RHGESDWN), 24–25 (TG), Arg63, 90–93 (ERHY), Lys101, 117–118 (RR), and 184–185 (GN) each bind substrate. The active-site Tele-phosphohistidine intermediate is His12. Glu90 functions as the Proton donor/acceptor in the catalytic mechanism.

It belongs to the phosphoglycerate mutase family. BPG-dependent PGAM subfamily.

The catalysed reaction is (2R)-2-phosphoglycerate = (2R)-3-phosphoglycerate. It participates in carbohydrate degradation; glycolysis; pyruvate from D-glyceraldehyde 3-phosphate: step 3/5. Catalyzes the interconversion of 2-phosphoglycerate and 3-phosphoglycerate. The chain is 2,3-bisphosphoglycerate-dependent phosphoglycerate mutase from Mycobacterium bovis (strain BCG / Pasteur 1173P2).